The primary structure comprises 274 residues: Elongation factor Ts (274 aa).

Positions T76–V79 are involved in Mg(2+) ion dislocation from EF-Tu.

This sequence belongs to the EF-Ts family.

It localises to the cytoplasm. In terms of biological role, associates with the EF-Tu.GDP complex and induces the exchange of GDP to GTP. It remains bound to the aminoacyl-tRNA.EF-Tu.GTP complex up to the GTP hydrolysis stage on the ribosome. The sequence is that of Elongation factor Ts from Mycobacterium sp. (strain JLS).